Reading from the N-terminus, the 65-residue chain is Large ribosomal subunit protein bL35 (65 aa).

3 stretches are compositionally biased toward basic residues: residues 1–18 (MPKMKTKSAAAKRFKRTA), 31–44 (HRFHGKTKKQRRQL), and 55–65 (VKRYKKMIPAK). Positions 1–65 (MPKMKTKSAA…KRYKKMIPAK (65 aa)) are disordered.

Belongs to the bacterial ribosomal protein bL35 family.

The protein is Large ribosomal subunit protein bL35 of Limosilactobacillus fermentum (strain NBRC 3956 / LMG 18251) (Lactobacillus fermentum).